A 103-amino-acid polypeptide reads, in one-letter code: N(4)-acetylcytidine amidohydrolase (103 aa).

One can recognise an ASCH domain in the interval 6–101 (ITFFQRFQDD…QTQFYVIEFK (96 aa)). The active-site Proton acceptor is the K21. The Nucleophile role is filled by T24. The active-site Proton donor is E74.

It belongs to the N(4)-acetylcytidine amidohydrolase family.

It catalyses the reaction N(4)-acetylcytidine + H2O = cytidine + acetate + H(+). It carries out the reaction N(4)-acetyl-2'-deoxycytidine + H2O = 2'-deoxycytidine + acetate + H(+). The catalysed reaction is N(4)-acetylcytosine + H2O = cytosine + acetate + H(+). In terms of biological role, catalyzes the hydrolysis of N(4)-acetylcytidine (ac4C). The sequence is that of N(4)-acetylcytidine amidohydrolase (yqfB) from Escherichia coli (strain SE11).